We begin with the raw amino-acid sequence, 581 residues long: Proline--tRNA ligase (581 aa).

This sequence belongs to the class-II aminoacyl-tRNA synthetase family. ProS type 1 subfamily. As to quaternary structure, homodimer.

It localises to the cytoplasm. It catalyses the reaction tRNA(Pro) + L-proline + ATP = L-prolyl-tRNA(Pro) + AMP + diphosphate. Functionally, catalyzes the attachment of proline to tRNA(Pro) in a two-step reaction: proline is first activated by ATP to form Pro-AMP and then transferred to the acceptor end of tRNA(Pro). As ProRS can inadvertently accommodate and process non-cognate amino acids such as alanine and cysteine, to avoid such errors it has two additional distinct editing activities against alanine. One activity is designated as 'pretransfer' editing and involves the tRNA(Pro)-independent hydrolysis of activated Ala-AMP. The other activity is designated 'posttransfer' editing and involves deacylation of mischarged Ala-tRNA(Pro). The misacylated Cys-tRNA(Pro) is not edited by ProRS. This chain is Proline--tRNA ligase, found in Variovorax paradoxus (strain S110).